The sequence spans 868 residues: Translation initiation factor IF-2 (868 aa).

Disordered regions lie at residues 158-178 (VKEE…DELT) and 200-269 (KKEE…KYRE). The segment covering 200–209 (KKEEVKPEKV) has biased composition (basic and acidic residues). Positions 249-260 (RGGRSKFKKKKG) are enriched in basic residues. The tr-type G domain occupies 368 to 537 (GRAPVVTIMG…LLQSEVLELK (170 aa)). The segment at 377–384 (GHVDHGKT) is G1. 377–384 (GHVDHGKT) lines the GTP pocket. The tract at residues 402-406 (GITQH) is G2. The tract at residues 423-426 (DTPG) is G3. GTP-binding positions include 423–427 (DTPGH) and 477–480 (NKMD). Residues 477 to 480 (NKMD) form a G4 region. The G5 stretch occupies residues 513-515 (SAK).

The protein belongs to the TRAFAC class translation factor GTPase superfamily. Classic translation factor GTPase family. IF-2 subfamily.

It is found in the cytoplasm. Its function is as follows. One of the essential components for the initiation of protein synthesis. Protects formylmethionyl-tRNA from spontaneous hydrolysis and promotes its binding to the 30S ribosomal subunits. Also involved in the hydrolysis of GTP during the formation of the 70S ribosomal complex. The polypeptide is Translation initiation factor IF-2 (Legionella pneumophila (strain Lens)).